Here is a 62-residue protein sequence, read N- to C-terminus: Alpha-conotoxin Vt1.27 (62 aa).

A signal peptide spans 1–21; the sequence is MGMRMMFTVFLLVVLATTVVS. Positions 22–40 are excised as a propeptide; that stretch reads FTLDRASDGASAAADLVAR. 2 disulfides stabilise this stretch: cysteine 46/cysteine 52 and cysteine 47/cysteine 61.

The protein belongs to the conotoxin A superfamily. As to expression, expressed by the venom duct.

It is found in the secreted. In terms of biological role, the short (45-61) amidated synthetic peptide inhibits the rat neuronal alpha-3-beta-2/CHRNA3-CHRNB2 nicotinic acetylcholine receptor (nAChR) (IC(50)=1.16 uM). It also inhibits Cav2.2/CACNA1C voltage-gated calcium channel (IC(50)=398 nM). In vivo, when tested in rat pain models, this short amidated peptide increases the pain threshold. The polypeptide is Alpha-conotoxin Vt1.27 (Conus planorbis (Planorbis cone)).